The following is a 140-amino-acid chain: Large ribosomal subunit protein bL17 (140 aa).

The segment at 121–140 is disordered; the sequence is AAKGLDSGPTAEANDDDSEE.

The protein belongs to the bacterial ribosomal protein bL17 family. Part of the 50S ribosomal subunit. Contacts protein L32.

This chain is Large ribosomal subunit protein bL17, found in Rhodospirillum rubrum (strain ATCC 11170 / ATH 1.1.1 / DSM 467 / LMG 4362 / NCIMB 8255 / S1).